Reading from the N-terminus, the 322-residue chain is Agmatinase (322 aa).

Positions 136, 160, 162, 164, 243, and 245 each coordinate Mn(2+).

The protein belongs to the arginase family. Agmatinase subfamily. Mn(2+) is required as a cofactor.

The catalysed reaction is agmatine + H2O = urea + putrescine. It functions in the pathway amine and polyamine biosynthesis; putrescine biosynthesis via agmatine pathway; putrescine from agmatine: step 1/1. Catalyzes the formation of putrescine from agmatine. This is Agmatinase from Chromobacterium violaceum (strain ATCC 12472 / DSM 30191 / JCM 1249 / CCUG 213 / NBRC 12614 / NCIMB 9131 / NCTC 9757 / MK).